A 565-amino-acid polypeptide reads, in one-letter code: Liver carboxylesterase 1 (565 aa).

A signal peptide spans 1-18 (MWLCALSLISLTACLSLG). An intrachain disulfide couples Cys87 to Cys116. Catalysis depends on Ser221, which acts as the Acyl-ester intermediate. A disulfide bridge connects residues Cys273 and Cys284. Glu353 functions as the Charge relay system in the catalytic mechanism. Ser378 is modified (phosphoserine). Asn388 carries an N-linked (GlcNAc...) asparagine glycan. His466 functions as the Charge relay system in the catalytic mechanism. An N-linked (GlcNAc...) asparagine glycan is attached at Asn489.

This sequence belongs to the type-B carboxylesterase/lipase family. As to quaternary structure, homotrimer and homohexamer. Binds to beta-glucuronidase. Detected in kidney, liver and lung.

It is found in the endoplasmic reticulum lumen. Its subcellular location is the cytoplasm. The protein resides in the lipid droplet. The catalysed reaction is a carboxylic ester + H2O = an alcohol + a carboxylate + H(+). It carries out the reaction cholesteryl (9Z-octadecenoate) + H2O = cholesterol + (9Z)-octadecenoate + H(+). The enzyme catalyses 2-(5Z,8Z,11Z,14Z-eicosatetraenoyl)-glycerol + H2O = glycerol + (5Z,8Z,11Z,14Z)-eicosatetraenoate + H(+). It catalyses the reaction prostaglandin E2 1-glyceryl ester + H2O = prostaglandin E2 + glycerol + H(+). The catalysed reaction is a cholesterol ester + H2O = cholesterol + a fatty acid + H(+). It carries out the reaction prostaglandin F2alpha 1-glyceryl ester + H2O = prostaglandin F2alpha + glycerol + H(+). Functionally, involved in the detoxification of xenobiotics and in the activation of ester and amide prodrugs. Hydrolyzes aromatic and aliphatic esters, but has no catalytic activity toward amides or a fatty acyl-CoA ester. Displays fatty acid ethyl ester synthase activity, catalyzing the ethyl esterification of oleic acid to ethyloleate. Converts monoacylglycerides to free fatty acids and glycerol. Hydrolyzes of 2-arachidonoylglycerol and prostaglandins. Hydrolyzes cellular cholesteryl esters to free cholesterols and promotes reverse cholesterol transport (RCT) by facilitating both the initial and final steps in the process. First of all, allows free cholesterol efflux from macrophages to extracellular cholesterol acceptors and secondly, releases free cholesterol from lipoprotein-delivered cholesteryl esters in the liver for bile acid synthesis or direct secretion into the bile. The protein is Liver carboxylesterase 1 of Mus musculus (Mouse).